The chain runs to 294 residues: Glyceraldehyde-3-phosphate dehydrogenase (294 aa).

3 residues coordinate NAD(+): Asp-19, Lys-63, and Thr-105. Residues 134 to 136 (SCT), Thr-165, 194 to 195 (TG), and Arg-217 each bind D-glyceraldehyde 3-phosphate. The active-site Nucleophile is Cys-135.

Belongs to the glyceraldehyde-3-phosphate dehydrogenase family. As to quaternary structure, homotetramer.

It is found in the cytoplasm. The catalysed reaction is D-glyceraldehyde 3-phosphate + phosphate + NAD(+) = (2R)-3-phospho-glyceroyl phosphate + NADH + H(+). It participates in carbohydrate degradation; glycolysis; pyruvate from D-glyceraldehyde 3-phosphate: step 1/5. Functionally, catalyzes the oxidative phosphorylation of glyceraldehyde 3-phosphate (G3P) to 1,3-bisphosphoglycerate (BPG) using the cofactor NAD. The first reaction step involves the formation of a hemiacetal intermediate between G3P and a cysteine residue, and this hemiacetal intermediate is then oxidized to a thioester, with concomitant reduction of NAD to NADH. The reduced NADH is then exchanged with the second NAD, and the thioester is attacked by a nucleophilic inorganic phosphate to produce BPG. The sequence is that of Glyceraldehyde-3-phosphate dehydrogenase (gap) from Serratia odorifera.